Reading from the N-terminus, the 385-residue chain is NADH-quinone oxidoreductase subunit D 2 (385 aa).

The protein belongs to the complex I 49 kDa subunit family. In terms of assembly, NDH-1 is composed of 14 different subunits. Subunits NuoB, C, D, E, F, and G constitute the peripheral sector of the complex.

It localises to the cell membrane. It carries out the reaction a quinone + NADH + 5 H(+)(in) = a quinol + NAD(+) + 4 H(+)(out). In terms of biological role, NDH-1 shuttles electrons from NADH, via FMN and iron-sulfur (Fe-S) centers, to quinones in the respiratory chain. The immediate electron acceptor for the enzyme in this species is believed to be a menaquinone. Couples the redox reaction to proton translocation (for every two electrons transferred, four hydrogen ions are translocated across the cytoplasmic membrane), and thus conserves the redox energy in a proton gradient. The polypeptide is NADH-quinone oxidoreductase subunit D 2 (Salinispora arenicola (strain CNS-205)).